The sequence spans 277 residues: Thymidylate synthase (277 aa).

Residues Arg-27 and Arg-132 to Arg-133 each bind dUMP. The active-site Nucleophile is Cys-152. Residues Arg-179–Asp-182, Asn-190, and His-220–Tyr-222 contribute to the dUMP site. Asp-182 is a binding site for (6R)-5,10-methylene-5,6,7,8-tetrahydrofolate. Ala-276 contacts (6R)-5,10-methylene-5,6,7,8-tetrahydrofolate.

Belongs to the thymidylate synthase family. Bacterial-type ThyA subfamily. As to quaternary structure, homodimer.

Its subcellular location is the cytoplasm. The enzyme catalyses dUMP + (6R)-5,10-methylene-5,6,7,8-tetrahydrofolate = 7,8-dihydrofolate + dTMP. It functions in the pathway pyrimidine metabolism; dTTP biosynthesis. Its function is as follows. Catalyzes the reductive methylation of 2'-deoxyuridine-5'-monophosphate (dUMP) to 2'-deoxythymidine-5'-monophosphate (dTMP) while utilizing 5,10-methylenetetrahydrofolate (mTHF) as the methyl donor and reductant in the reaction, yielding dihydrofolate (DHF) as a by-product. This enzymatic reaction provides an intracellular de novo source of dTMP, an essential precursor for DNA biosynthesis. This Albidiferax ferrireducens (strain ATCC BAA-621 / DSM 15236 / T118) (Rhodoferax ferrireducens) protein is Thymidylate synthase.